The following is a 179-amino-acid chain: MAKLHEVYKDKVVAELQEKFGFSSVMQVPLIEKITLNMGVGEALADKKILDNAVADLAAISGQKPLITKARKSVAGFKVREGYPIGCKVTLRGERMWDFFERLVSIAIPRIRDFRGVSAKSFDGRGNYSMGVREQIIFPEIDYDKVDRVRGMDITITTSAKSDEEGRALLEAFNFPFKK.

Belongs to the universal ribosomal protein uL5 family. In terms of assembly, part of the 50S ribosomal subunit; part of the 5S rRNA/L5/L18/L25 subcomplex. Contacts the 5S rRNA and the P site tRNA. Forms a bridge to the 30S subunit in the 70S ribosome.

Its function is as follows. This is one of the proteins that bind and probably mediate the attachment of the 5S RNA into the large ribosomal subunit, where it forms part of the central protuberance. In the 70S ribosome it contacts protein S13 of the 30S subunit (bridge B1b), connecting the 2 subunits; this bridge is implicated in subunit movement. Contacts the P site tRNA; the 5S rRNA and some of its associated proteins might help stabilize positioning of ribosome-bound tRNAs. The sequence is that of Large ribosomal subunit protein uL5 from Pseudoalteromonas translucida (strain TAC 125).